We begin with the raw amino-acid sequence, 240 residues long: Ribosomal RNA small subunit methyltransferase G (240 aa).

S-adenosyl-L-methionine is bound by residues G79, 130–131 (AE), and R149.

Belongs to the methyltransferase superfamily. RNA methyltransferase RsmG family.

Its subcellular location is the cytoplasm. Its function is as follows. Specifically methylates the N7 position of a guanine in 16S rRNA. This Moorella thermoacetica (strain ATCC 39073 / JCM 9320) protein is Ribosomal RNA small subunit methyltransferase G.